Consider the following 479-residue polypeptide: MNWSHSCISFCWIYFAASRLRAAETADGKYAQKLFNDLFEDYSNALRPVEDTDKVLNVTLQITLSQIKDMDERNQILTAYLWIRQIWHDAYLTWDRDQYDGLDSIRIPSDLVWRPDIVLYNKADDESSEPVNTNVVLRYDGLITWDAPAITKSSCVVDVTYFPFDNQQCNLTFGSWTYNGNQVDIFNALDSGDLSDFIEDVEWEVHGMPAVKNVISYGCCSEPYPDVTFTLLLKRRSSFYIVNLLIPCVLISFLAPLSFYLPAASGEKVSLGVTILLAMTVFQLMVAEIMPASENVPLIGKYYIATMALITASTALTIMVMNIHFCGAEARPVPHWARVVILKYMSRVLFVYDVGESCLSPHHSRERDHLTKVYSKLPESNLKAARNKDLSRKKDMNKRLKNDLGCQGKNPQEAESYCAQYKVLTRNIEYIAKCLKDHKATNSKGSEWKKVAKVIDRFFMWIFFIMVFVMTILIIARAD.

The N-terminal stretch at 1–22 (MNWSHSCISFCWIYFAASRLRA) is a signal peptide. The Extracellular segment spans residues 23 to 238 (AETADGKYAQ…FTLLLKRRSS (216 aa)). N-linked (GlcNAc...) asparagine glycosylation occurs at asparagine 57. A disulfide bond links cysteine 155 and cysteine 169. N-linked (GlcNAc...) asparagine glycosylation occurs at asparagine 170. The Na(+) site is built by serine 191 and aspartate 193. An intrachain disulfide couples cysteine 219 to cysteine 220. 3 helical membrane passes run 239-259 (FYIV…PLSF), 269-289 (VSLG…VAEI), and 303-323 (YIAT…VMNI). Residues 324–457 (HFCGAEARPV…WKKVAKVIDR (134 aa)) are Cytoplasmic-facing. A helical transmembrane segment spans residues 458–478 (FFMWIFFIMVFVMTILIIARA).

Belongs to the ligand-gated ion channel (TC 1.A.9) family. Acetylcholine receptor (TC 1.A.9.1) subfamily. Alpha-9/CHRNA9 sub-subfamily. As to quaternary structure, forms homo- or heteropentameric channels in conjunction with CHRNA10. The native outer hair cell receptor is composed of CHRNA9:CHRNA10 heterooligomers. Found in the stoichiometric form (CHRNA9)2:(CHRNA10)3. In terms of processing, N-glycosylated. As to expression, expressed in cochlea, keratinocytes, pituitary gland, B-cells and T-cells.

The protein localises to the synaptic cell membrane. It is found in the cell membrane. The enzyme catalyses Ca(2+)(in) = Ca(2+)(out). It catalyses the reaction K(+)(in) = K(+)(out). It carries out the reaction Na(+)(in) = Na(+)(out). The catalysed reaction is Mg(2+)(in) = Mg(2+)(out). Activated by a myriad of ligands such as acetylcholine. AChR activity is inhibited by the antagonist alpha-conotoxins RgIA and GeXXA, small disulfide-constrained peptides from cone snails. In terms of biological role, component of neuronal acetylcholine receptors (nAChRs) that function as pentameric, ligand-gated cation channels with high calcium permeability among other activities. nAChRs are excitatory neurotrasnmitter receptors formed by a collection of nAChR subunits known to mediate synaptic transmission in the nervous system and the neuromuscular junction. Each nAchR subunit confers differential attributes to channel properties, including activation, deactivation and desensitization kinetics, pH sensitivity, cation permeability, and binding to allosteric modulators. Forms either homopentamers or heteropentamers with CHRNA10. Expressed in the inner ear, in sympathetic neurons and in other non-neuronal cells, such as skin keratinocytes and lymphocytes. nAChR formed by CHRNA9:CHRNA10 mediate central nervous system control of auditory and vestibular sensory processing. The channel is permeable to a range of divalent cations including calcium, the influx of which may activate a potassium current which hyperpolarizes the cell membrane. In the ear, mediates synaptic transmission between efferent olivocochlear fibers and hair cells of the cochlea, this may lead to a reduction in basilar membrane motion, altering the activity of auditory nerve fibers and reducing the range of dynamic hearing. This may protect against acoustic trauma. May also regulate keratinocyte adhesion. The sequence is that of Neuronal acetylcholine receptor subunit alpha-9 from Homo sapiens (Human).